A 293-amino-acid polypeptide reads, in one-letter code: MADDAGAAGGPGGPGGPGMGGRGGFRGGFGSGVRGRGRGRGRGRGRGRGARGGKAEDKEWLPVTKLGRLVKDMKIKSLEEIYLFSLPIKESEIIDFFLGASLKDEVLKIMPVQKQTRAGQRTRFKAFVAIGDYNGHVGLGVKCSKEVATAIRGAIILAKLSIVPVRRGYWGNKIGKPHTVPCKVTGRCGSVLVRLIPAPRGTGIVSAPVPKKLLMMAGIDDCYTSARGCTATLGNFAKATFDAISKTYSYLTPDLWKETVFTKSPYQEFTDHLVKTHTRVSVQRTQAPAVATT.

Residues 1-56 form a disordered region; the sequence is MADDAGAAGGPGGPGGPGMGGRGGFRGGFGSGVRGRGRGRGRGRGRGRGARGGKAE. Ala2 is modified (N-acetylalanine). The span at 7 to 34 shows a compositional bias: gly residues; it reads AAGGPGGPGGPGMGGRGGFRGGFGSGVR. The span at 35–51 shows a compositional bias: basic residues; sequence GRGRGRGRGRGRGRGAR. Glycyl lysine isopeptide (Lys-Gly) (interchain with G-Cter in ubiquitin) cross-links involve residues Lys54 and Lys58. The 64-residue stretch at 102–165 folds into the S5 DRBM domain; it reads LKDEVLKIMP…ILAKLSIVPV (64 aa). Thr252 bears the Phosphothreonine mark. An N6-acetyllysine modification is found at Lys263. Ser264 is subject to Phosphoserine. A Phosphothreonine modification is found at Thr270. Lys275 carries the N6-acetyllysine; alternate modification. A Glycyl lysine isopeptide (Lys-Gly) (interchain with G-Cter in SUMO1); alternate cross-link involves residue Lys275. A Glycyl lysine isopeptide (Lys-Gly) (interchain with G-Cter in SUMO2); alternate cross-link involves residue Lys275. Lys275 is covalently cross-linked (Glycyl lysine isopeptide (Lys-Gly) (interchain with G-Cter in ubiquitin); alternate). Ser281 carries the post-translational modification Phosphoserine.

It belongs to the universal ribosomal protein uS5 family. Component of the small ribosomal subunit. Interacts with zinc finger protein ZNF277 (via zinc-finger domains); the interaction is direct; the interaction is extra-ribosomal. Interaction with ZNF277 competes with the binding of RPS2 to protein arginine methyltransferase PRMT3. Citrullinated by PADI4 in the Arg/Gly-rich region. In terms of processing, asymmetric arginine dimethylation by PRMT3 occurs at multiple sites in the Arg/Gly-rich region. Post-translationally, monoubiquitinated at Lys-54 and Lys-58 by RNF10 when a ribosome has stalled during translation, leading to its degradation by the proteasome. Deubiquitinated at Lys-54 and Lys-58 by USP10, preventing degradation by the proteasome and promoting 40S ribosome subunit recycling following ribosome dissociation.

The protein localises to the cytoplasm. It is found in the nucleus. The protein resides in the nucleolus. Its function is as follows. Component of the ribosome, a large ribonucleoprotein complex responsible for the synthesis of proteins in the cell. The small ribosomal subunit (SSU) binds messenger RNAs (mRNAs) and translates the encoded message by selecting cognate aminoacyl-transfer RNA (tRNA) molecules. The large subunit (LSU) contains the ribosomal catalytic site termed the peptidyl transferase center (PTC), which catalyzes the formation of peptide bonds, thereby polymerizing the amino acids delivered by tRNAs into a polypeptide chain. The nascent polypeptides leave the ribosome through a tunnel in the LSU and interact with protein factors that function in enzymatic processing, targeting, and the membrane insertion of nascent chains at the exit of the ribosomal tunnel. Plays a role in the assembly and function of the 40S ribosomal subunit. Mutations in this protein affects the control of translational fidelity. Involved in nucleolar processing of pre-18S ribosomal RNA and ribosome assembly. The polypeptide is Small ribosomal subunit protein uS5 (RPS2) (Bos taurus (Bovine)).